We begin with the raw amino-acid sequence, 330 residues long: Aspartate--ammonia ligase (330 aa).

Belongs to the class-II aminoacyl-tRNA synthetase family. AsnA subfamily.

It is found in the cytoplasm. It carries out the reaction L-aspartate + NH4(+) + ATP = L-asparagine + AMP + diphosphate + H(+). The protein operates within amino-acid biosynthesis; L-asparagine biosynthesis; L-asparagine from L-aspartate (ammonia route): step 1/1. This is Aspartate--ammonia ligase from Haemophilus ducreyi (strain 35000HP / ATCC 700724).